Consider the following 612-residue polypeptide: Sulfite reductase [NADPH] hemoprotein beta-component (612 aa).

The segment at 1-26 (MDDHKPIETPDGPAVDTPGIGARRYE) is disordered. Positions 469, 475, 514, and 518 each coordinate [4Fe-4S] cluster. Residue Cys-518 coordinates siroheme.

It belongs to the nitrite and sulfite reductase 4Fe-4S domain family. In terms of assembly, alpha(8)-beta(8). The alpha component is a flavoprotein, the beta component is a hemoprotein. It depends on siroheme as a cofactor. Requires [4Fe-4S] cluster as cofactor.

It carries out the reaction hydrogen sulfide + 3 NADP(+) + 3 H2O = sulfite + 3 NADPH + 4 H(+). It functions in the pathway sulfur metabolism; hydrogen sulfide biosynthesis; hydrogen sulfide from sulfite (NADPH route): step 1/1. In terms of biological role, component of the sulfite reductase complex that catalyzes the 6-electron reduction of sulfite to sulfide. This is one of several activities required for the biosynthesis of L-cysteine from sulfate. This chain is Sulfite reductase [NADPH] hemoprotein beta-component, found in Methylorubrum extorquens (strain CM4 / NCIMB 13688) (Methylobacterium extorquens).